The chain runs to 555 residues: Glucose-6-phosphate isomerase (555 aa).

Residues 169 to 170 (GS), 219 to 224 (SKTFTT), Gln-364, Glu-368, His-399, and Lys-521 each bind D-glucose 6-phosphate. The active-site Proton donor is the Glu-368. Catalysis depends on residues His-399 and Lys-521.

The protein belongs to the GPI family. In terms of assembly, homodimer.

The protein resides in the cytoplasm. Its subcellular location is the cytosol. The enzyme catalyses alpha-D-glucose 6-phosphate = beta-D-fructose 6-phosphate. The protein operates within carbohydrate degradation; glycolysis; D-glyceraldehyde 3-phosphate and glycerone phosphate from D-glucose: step 2/4. In the cytoplasm, catalyzes the conversion of glucose-6-phosphate to fructose-6-phosphate, the second step in glycolysis, and the reverse reaction during gluconeogenesis. The sequence is that of Glucose-6-phosphate isomerase (PGI1) from Candida glabrata (strain ATCC 2001 / BCRC 20586 / JCM 3761 / NBRC 0622 / NRRL Y-65 / CBS 138) (Yeast).